The primary structure comprises 194 residues: Histone H1 (194 aa).

Position 1 is an N-acetylalanine; partial (alanine 1). Positions 1 to 14 are enriched in low complexity; the sequence is AEVAPAPAAAAPAK. 2 disordered regions span residues 1–31 and 105–194; these read AEVAPAPAAAAPAKAPKKKAAAKPKKSGPAV and AKKP…AAKK. The segment covering 15–26 has biased composition (basic residues); that stretch reads APKKKAAAKPKK. Residues 27–100 form the H15 domain; sequence SGPAVGELAG…GASGSFKLNK (74 aa). Residues 116-194 are compositionally biased toward basic residues; that stretch reads KAKKVAAKKP…KVKKPAAAKK (79 aa). Residues serine 145, serine 161, and serine 182 each carry the phosphoserine modification.

This sequence belongs to the histone H1/H5 family.

It localises to the nucleus. It is found in the chromosome. Its function is as follows. Histones H1 are necessary for the condensation of nucleosome chains into higher-order structures. This chain is Histone H1, found in Salmo trutta (Brown trout).